We begin with the raw amino-acid sequence, 367 residues long: DNA polymerase IV (367 aa).

Residues 14–198 (IIHIDMDAFF…LPIAKFHGVG (185 aa)) form the UmuC domain. Residues aspartate 18 and aspartate 116 each coordinate Mg(2+). The active site involves glutamate 117.

The protein belongs to the DNA polymerase type-Y family. In terms of assembly, monomer. Requires Mg(2+) as cofactor.

It localises to the cytoplasm. The catalysed reaction is DNA(n) + a 2'-deoxyribonucleoside 5'-triphosphate = DNA(n+1) + diphosphate. In terms of biological role, poorly processive, error-prone DNA polymerase involved in untargeted mutagenesis. Copies undamaged DNA at stalled replication forks, which arise in vivo from mismatched or misaligned primer ends. These misaligned primers can be extended by PolIV. Exhibits no 3'-5' exonuclease (proofreading) activity. May be involved in translesional synthesis, in conjunction with the beta clamp from PolIII. The chain is DNA polymerase IV from Streptococcus thermophilus (strain ATCC BAA-491 / LMD-9).